The chain runs to 577 residues: Arginine--tRNA ligase (577 aa).

The short motif at 123–133 is the 'HIGH' region element; the sequence is PNLAKEMHVGH.

The protein belongs to the class-I aminoacyl-tRNA synthetase family. Monomer.

Its subcellular location is the cytoplasm. It carries out the reaction tRNA(Arg) + L-arginine + ATP = L-arginyl-tRNA(Arg) + AMP + diphosphate. This chain is Arginine--tRNA ligase, found in Marinomonas sp. (strain MWYL1).